Reading from the N-terminus, the 264-residue chain is tRNA pseudouridine synthase A (264 aa).

Aspartate 51 functions as the Nucleophile in the catalytic mechanism. Tyrosine 109 contacts substrate.

It belongs to the tRNA pseudouridine synthase TruA family. As to quaternary structure, homodimer.

The catalysed reaction is uridine(38/39/40) in tRNA = pseudouridine(38/39/40) in tRNA. Functionally, formation of pseudouridine at positions 38, 39 and 40 in the anticodon stem and loop of transfer RNAs. In Vibrio parahaemolyticus serotype O3:K6 (strain RIMD 2210633), this protein is tRNA pseudouridine synthase A.